Here is a 403-residue protein sequence, read N- to C-terminus: Nucleolar protein 13 (403 aa).

Basic and acidic residues-rich tracts occupy residues 1-35 (MSET…RKAE) and 75-97 (KSIE…KDAQ). Disordered stretches follow at residues 1-43 (MSET…IDLK) and 72-116 (IDPK…EVVK). The residue at position 2 (serine 2) is an N-acetylserine. Serine 2 is subject to Phosphoserine. Over residues 99-108 (EESTINTPTG) the composition is skewed to polar residues. Threonine 105 bears the Phosphothreonine mark. RRM domains lie at 125–219 (YGVW…DSEN) and 239–317 (RILF…YGED). The segment covering 313–329 (EYGEDRSKRQVRKKVEN) has biased composition (basic and acidic residues). The segment at 313-403 (EYGEDRSKRQ…PSQGKKVKFD (91 aa)) is disordered. The span at 330–344 (VSRNNSSSFDISNNK) shows a compositional bias: polar residues. Serine 335 carries the post-translational modification Phosphoserine. Over residues 345 to 361 (GYDRAGQDNGSKPEYKR) the composition is skewed to basic and acidic residues. Polar residues predominate over residues 371-381 (DSNNRTKSSVA).

The protein localises to the nucleus. The protein resides in the nucleolus. The polypeptide is Nucleolar protein 13 (NOP13) (Saccharomyces cerevisiae (strain ATCC 204508 / S288c) (Baker's yeast)).